A 147-amino-acid chain; its full sequence is Large ribosomal subunit protein bL9 (147 aa).

The protein belongs to the bacterial ribosomal protein bL9 family.

Its function is as follows. Binds to the 23S rRNA. The protein is Large ribosomal subunit protein bL9 of Mesoplasma florum (strain ATCC 33453 / NBRC 100688 / NCTC 11704 / L1) (Acholeplasma florum).